The following is a 208-amino-acid chain: Small ribosomal subunit protein eS1 (208 aa).

It belongs to the eukaryotic ribosomal protein eS1 family.

The protein is Small ribosomal subunit protein eS1 of Saccharolobus solfataricus (strain ATCC 35092 / DSM 1617 / JCM 11322 / P2) (Sulfolobus solfataricus).